A 713-amino-acid chain; its full sequence is MLLATLLLLLLGGALAHPDRIIFPNHACEDPPAVLLEVQGTLQRPLVRDSRTSPANCTWLILGSKEQTVTIRFQKLHLACGSERLTLRSPLQPLISLCEAPPSPLQLPGGNVTITYSYAGARAPMGQGFLLSYSQDWLMCLQEEFQCLNHRCVSAVQRCDGVDACGDGSDEAGCSSDPFPGLTPRPVPSLPCNVTLEDFYGVFSSPGYTHLASVSHPQSCHWLLDPHDGRRLAVRFTALDLGFGDAVHVYDGPGPPESSRLLRSLTHFSNGKAVTVETLSGQAVVSYHTVAWSNGRGFNATYHVRGYCLPWDRPCGLGSGLGAGEGLGERCYSEAQRCDGSWDCADGTDEEDCPGCPPGHFPCGAAGTSGATACYLPADRCNYQTFCADGADERRCRHCQPGNFRCRDEKCVYETWVCDGQPDCADGSDEWDCSYVLPRKVITAAVIGSLVCGLLLVIALGCTCKLYAIRTQEYSIFAPLSRMEAEIVQQQAPPSYGQLIAQGAIPPVEDFPTENPNDNSVLGNLRSLLQILRQDMTPGGGPGARRRQRGRLMRRLVRRLRRWGLLPRTNTPARASEARSQVTPSAAPLEALDGGTGPAREGGAVGGQDGEQAPPLPIKAPLPSASTSPAPTTVPEAPGPLPSLPLEPSLLSGVVQALRGRLLPSLGPPGPTRSPPGPHTAVLALEDEDDVLLVPLAEPGVWVAEAEDEPLLT.

The signal sequence occupies residues 1–16; that stretch reads MLLATLLLLLLGGALA. Residues 17-440 are Extracellular-facing; that stretch reads HPDRIIFPNH…WDCSYVLPRK (424 aa). 2 disulfide bridges follow: C28–C57 and C80–C98. The CUB 1 domain occupies 28–136; that stretch reads CEDPPAVLLE…QGFLLSYSQD (109 aa). N-linked (GlcNAc...) asparagine glycosylation is present at N56. An N-linked (GlcNAc...) asparagine glycan is attached at N111. The region spanning 139-175 is the LDL-receptor class A 1 domain; sequence MCLQEEFQCLNHRCVSAVQRCDGVDACGDGSDEAGCS. 4 disulfides stabilise this stretch: C140–C152, C147–C165, C159–C174, and C192–C220. The 114-residue stretch at 192-305 folds into the CUB 2 domain; the sequence is CNVTLEDFYG…RGFNATYHVR (114 aa). Residues N193 and N299 are each glycosylated (N-linked (GlcNAc...) asparagine). LDL-receptor class A domains are found at residues 307-354, 355-397, and 398-434; these read YCLP…EDCP, GCPP…RRCR, and HCQP…WDCS. Intrachain disulfides connect C308/C331, C315/C344, C338/C353, C356/C374, C363/C387, C381/C396, C399/C411, C406/C424, and C418/C433. A helical membrane pass occupies residues 441–461; it reads VITAAVIGSLVCGLLLVIALG. The Cytoplasmic portion of the chain corresponds to 462 to 713; that stretch reads CTCKLYAIRT…AEAEDEPLLT (252 aa). The segment at 564–637 is disordered; that stretch reads GLLPRTNTPA…SPAPTTVPEA (74 aa). Residues 569–584 are compositionally biased toward polar residues; it reads TNTPARASEARSQVTP. Residue T596 is modified to Phosphothreonine. Positions 621–636 are enriched in low complexity; the sequence is PLPSASTSPAPTTVPE.

This sequence belongs to the LDLR family. As to expression, expressed in blood leukocyte, lung, placenta, small intestine, liver, kidney, spleen, thymus, colon, skeletal muscle and heart.

Its subcellular location is the membrane. The protein resides in the coated pit. Its function is as follows. Probable receptor, which is involved in the internalization of lipophilic molecules and/or signal transduction. May be involved in the uptake of lipoprotein APOE in liver. This is Low-density lipoprotein receptor-related protein 10 (LRP10) from Homo sapiens (Human).